The chain runs to 377 residues: Homocitrate synthase 1 (377 aa).

In terms of domain architecture, Pyruvate carboxyltransferase spans 4–255 (VLINDTTLRD…DMGIDTPRLL (252 aa)).

Belongs to the alpha-IPM synthase/homocitrate synthase family.

It carries out the reaction acetyl-CoA + 2-oxoglutarate + H2O = (2R)-homocitrate + CoA + H(+). This protein is a Fe-Mo-cofactor biosynthetic component. The chain is Homocitrate synthase 1 (nifV1) from Nostoc sp. (strain PCC 7120 / SAG 25.82 / UTEX 2576).